Reading from the N-terminus, the 337-residue chain is Large ribosomal subunit protein uL3 (337 aa).

The protein belongs to the universal ribosomal protein uL3 family. In terms of assembly, part of the 50S ribosomal subunit. Forms a cluster with proteins L14 and L24e.

Its function is as follows. One of the primary rRNA binding proteins, it binds directly near the 3'-end of the 23S rRNA, where it nucleates assembly of the 50S subunit. This Methanosphaerula palustris (strain ATCC BAA-1556 / DSM 19958 / E1-9c) protein is Large ribosomal subunit protein uL3.